Consider the following 420-residue polypeptide: 3-isopropylmalate dehydratase large subunit (420 aa).

Positions 300, 360, and 363 each coordinate [4Fe-4S] cluster.

Belongs to the aconitase/IPM isomerase family. LeuC type 2 subfamily. In terms of assembly, heterodimer of LeuC and LeuD. It depends on [4Fe-4S] cluster as a cofactor.

The catalysed reaction is (2R,3S)-3-isopropylmalate = (2S)-2-isopropylmalate. It functions in the pathway amino-acid biosynthesis; L-leucine biosynthesis; L-leucine from 3-methyl-2-oxobutanoate: step 2/4. Its function is as follows. Catalyzes the isomerization between 2-isopropylmalate and 3-isopropylmalate, via the formation of 2-isopropylmaleate. In Heliobacterium modesticaldum (strain ATCC 51547 / Ice1), this protein is 3-isopropylmalate dehydratase large subunit.